The chain runs to 294 residues: Protoheme IX farnesyltransferase (294 aa).

9 consecutive transmembrane segments (helical) span residues 25–45, 48–68, 92–112, 115–135, 141–161, 170–190, 216–236, 240–260, and 272–292; these read SLVL…MGAV, LVTL…NCYW, AVAL…LALG, VLTA…YTPL, AAML…WTAV, FSLF…IALF, VVLY…LHIA, YLAA…WGFF, and FFFS…DRVP.

Belongs to the UbiA prenyltransferase family. Protoheme IX farnesyltransferase subfamily.

The protein localises to the cell inner membrane. The enzyme catalyses heme b + (2E,6E)-farnesyl diphosphate + H2O = Fe(II)-heme o + diphosphate. It functions in the pathway porphyrin-containing compound metabolism; heme O biosynthesis; heme O from protoheme: step 1/1. Functionally, converts heme B (protoheme IX) to heme O by substitution of the vinyl group on carbon 2 of heme B porphyrin ring with a hydroxyethyl farnesyl side group. The polypeptide is Protoheme IX farnesyltransferase (Myxococcus xanthus (strain DK1622)).